A 413-amino-acid chain; its full sequence is Mitochondrial inner membrane magnesium transporter MFM1 (413 aa).

Residues 1-35 constitute a mitochondrion transit peptide; that stretch reads MRAFPRVLPFRHQRSYNNILLRTVRLFGSSLSSFD. N202 is a glycosylation site (N-linked (GlcNAc...) asparagine). Residues 329 to 349 traverse the membrane as a helical segment; sequence LMLLGIRYAIGMLSLGGALFL. Positions 353–356 match the YGMN motif; the sequence is YGMN. A helical membrane pass occupies residues 367–387; that stretch reads AYLTVTILGLISTVWLYAKGI.

The protein belongs to the CorA metal ion transporter (MIT) (TC 1.A.35) family. Forms homooligomers. Interacts with MRS2. Post-translationally, N-glycosylated. Glycosylation is important for correct localization of the protein.

It is found in the mitochondrion inner membrane. In terms of biological role, mitochondrial inner membrane magnesium transporter required for mitochondrial magnesium homeostasis. Modulates the conductance of the MRS2 channel. Involved in the splicing of mRNA group II introns in mitochondria by affecting mitochondrial magnesium concentrations, which are critical for group II intron splicing. The chain is Mitochondrial inner membrane magnesium transporter MFM1 (MFM1) from Saccharomyces cerevisiae (strain ATCC 204508 / S288c) (Baker's yeast).